Here is a 140-residue protein sequence, read N- to C-terminus: Nuclear receptor 2C2-associated protein (140 aa).

Belongs to the NR2C2AP family. Interacts with NR2C2/TR4.

The protein localises to the nucleus. May act as a repressor of NR2C2-mediated transactivation by suppressing the binding between NR2C2/TR4 and the TR4-response element in target genes. The protein is Nuclear receptor 2C2-associated protein (NR2C2AP) of Bos taurus (Bovine).